Consider the following 2372-residue polypeptide: Nonribosomal peptide synthase roqA (2372 aa).

Residues 217–610 (EHCRSQPDAE…VGRKDREVKI (394 aa)) form an adenylation 1 region. Residues 723–745 (AASSHSSTREQPSNQRDKEDVEL) form a disordered region. Polar residues predominate over residues 725–736 (SSHSSTREQPSN). The Carrier 1 domain occupies 750 to 823 (SAKENTLCSV…KIARCTAESK (74 aa)). O-(pantetheine 4'-phosphoryl)serine is present on S784. Residues 856–1122 (EDIYPCTPLQ…FATFPFRTQL (267 aa)) are condensation 1. The segment at 1290–1679 (QPNSEAVCAW…VGRKDTQVKL (390 aa)) is adenylation 2. The Carrier 2 domain maps to 1819–1895 (KPTTEQERFV…LFCKHVILIQ (77 aa)). S1856 is modified (O-(pantetheine 4'-phosphoryl)serine). The tract at residues 1962–2227 (TSNYTSTAIF…FNVLPCRIAI (266 aa)) is condensation 2.

Its pathway is alkaloid biosynthesis. Its function is as follows. Dipeptide synthase; part of the gene cluster that mediates the biosynthesis of the mycotoxins roquefortine C and meleagrin. The first stage is catalyzed by the dipeptide synthase roqA which condenses histidine and tryptophan to produce histidyltryptophanyldiketopiperazine (HTD). HTD is then converted to roquefortine C through two possible pathways. In the first pathway, prenyltransferase roqD transforms HTD to the intermediate roquefortine D, which is in turn converted to roquefortine C by the cytochrome P450 monooxygenase roqR. In the second pathway, HTD is first converted to the intermediate dehydrohistidyltryptophanyldi-ketopiperazine (DHTD) by roqR which is then prenylated by roqD to form roquefortine C. Roquefortine C can be further transformed to meleagrin via three more reactions including oxydation to glandicolin A by roqM, which is further reduced to glandicoline B by roqO. Finally, glandicoline B is converted to meleagrin by the glandicoline B O-methyltransferase roqN. More studies identified further branching and additional metabolites produced by the roquefortine/meleagrin cluster, including roquefortine F, roquefortine L, roquefortine M, roquefortine N and neoxaline. This is Nonribosomal peptide synthase roqA from Penicillium rubens (strain ATCC 28089 / DSM 1075 / NRRL 1951 / Wisconsin 54-1255) (Penicillium chrysogenum).